The sequence spans 365 residues: C-X-C chemokine receptor type 3 (365 aa).

Residues 1–57 (MVPEMSERQVFQASELTYLLENCSSSYDYAENESDSCCASPPCPQDISLNFDRAFLP) lie on the Extracellular side of the membrane. N-linked (GlcNAc...) asparagine glycosylation is present at asparagine 22. Sulfotyrosine is present on residues tyrosine 27 and tyrosine 29. The N-linked (GlcNAc...) asparagine glycan is linked to asparagine 32. The helical transmembrane segment at 58–78 (ALYGLLFLLGLLGNGAVAAVL) threads the bilayer. Residues 79–88 (CSQRAARTST) lie on the Cytoplasmic side of the membrane. A helical transmembrane segment spans residues 89 to 109 (DTFLLHLAVADMLLVLTLPLW). Over 110 to 126 (RVDTAVQWVFGSGLCKV) the chain is Extracellular. A disulfide bond links cysteine 124 and cysteine 203. The chain crosses the membrane as a helical span at residues 127 to 147 (AGALFNINFYAGALLLACISF). At 148–169 (DRYLSIVHATQPYRRGPPARVT) the chain is on the cytoplasmic side. The helical transmembrane segment at 170–190 (LTCVVVWGLCLFFAIPDFIFL) threads the bilayer. Topologically, residues 191 to 223 (SANRDERLNAMHCRYNFPQVGRTALRGLQLVAG) are extracellular. A helical transmembrane segment spans residues 224 to 244 (FLLPLLVMAYCYARILAVLLV). At 245–256 (SRGQRRQRRMRL) the chain is on the cytoplasmic side. Residues 257–277 (VVVVVVAFALCWTPYHLVVLV) form a helical membrane-spanning segment. The Extracellular segment spans residues 278–301 (DTLMDLGALDRNCGRESRVDVAKS). A helical transmembrane segment spans residues 302–322 (VTSGLGYMHCCLNPLLYAFVG). Residues 323–365 (VKFRERMWMLLLRLGCPDHRGHQRHPTLSRRESSWSETPSTPR) are Cytoplasmic-facing. Residues 342–365 (RGHQRHPTLSRRESSWSETPSTPR) form a disordered region.

Belongs to the G-protein coupled receptor 1 family. In terms of assembly, homomer. Forms heteromers with ACKR4. Interacts with PF4/CXCL4. Sulfation on Tyr-27 and Tyr-29 is essential for CXCL10 binding. Post-translationally, N-glycosylated.

The protein localises to the cell membrane. In terms of biological role, receptor for the C-X-C chemokine CXCL9, CXCL10 and CXCL11 and mediates the proliferation, survival and angiogenic activity of mesangial cells through a heterotrimeric G-protein signaling pathway. Probably promotes cell chemotaxis response. Binds to CCL21. Upon activation by PF4, induces activated T-lymphocytes migration mediated via downstream Ras/extracellular signal-regulated kinase (ERK) signaling. The polypeptide is C-X-C chemokine receptor type 3 (CXCR3) (Canis lupus familiaris (Dog)).